A 170-amino-acid chain; its full sequence is MNTQWDSPSLGRWSLVLLLLGLVMPLAIVAQVLSYQEAVLRAIDGINQRSSDANLYRLLDLDPRPTMDGDPDTPKPVSFTVKETVCPRTIQRSPEECDFREDGLVKWCVGTVTLNQAKDSFDISCDKDKRKVAQLGDVLQKAGEKIVRGLKNIGQRIKDFFGKLTPRTES.

The first 30 residues, Met-1 to Ala-30, serve as a signal peptide directing secretion. Positions Gln-31–Lys-131 are cleaved as a propeptide — cathelin-like domain (CLD). 2 disulfide bridges follow: Cys-86/Cys-97 and Cys-108/Cys-125. The tract at residues Leu-150–Gly-162 is active core.

This sequence belongs to the cathelicidin family. Monomer, homodimer or homotrimer (in vitro). Oligomerizes as tetra- or hexamer in solution (in vitro). Proteolytically cleaved by proteinase PRTN3 into antibacterial peptide LL-37. Proteolytically cleaved by cathepsin CTSG and neutrophil elastase ELANE. In terms of processing, resistant to proteolytic degradation in solution, and when bound to both zwitterionic (mimicking mammalian membranes) and negatively charged membranes (mimicking bacterial membranes). Post-translationally, after secretion onto the skin surface, the CAMP gene product is processed by a serine protease-dependent mechanism into multiple novel antimicrobial peptides distinct from and shorter than cathelicidin LL-37. These peptides show enhanced antimicrobial action, acquiring the ability to kill skin pathogens such as S.aureus, E.coli and C.albicans. These peptides have lost the ability to stimulate CXCL8/IL8 release from keratinocytes. The peptides act synergistically, killing bacteria at lower concentrations when present together, and maintain activity at increased salt condition.

Its subcellular location is the secreted. It localises to the vesicle. Antimicrobial protein that is an integral component of the innate immune system. Binds to bacterial lipopolysaccharides (LPS). Acts via neutrophil N-formyl peptide receptors to enhance the release of CXCL2. Postsecretory processing generates multiple cathelicidin antimicrobial peptides with various lengths which act as a topical antimicrobial defense in sweat on skin. The unprocessed precursor form, cathelicidin antimicrobial peptide, inhibits the growth of Gram-negative E.coli and E.aerogenes with efficiencies comparable to that of the mature peptide LL-37 (in vitro). Its function is as follows. Antimicrobial peptide that is an integral component of the innate immune system. Binds to bacterial lipopolysaccharides (LPS). Causes membrane permeabilization by forming transmembrane pores (in vitro). Causes lysis of E.coli. Exhibits antimicrobial activity against Gram-negative bacteria such as P.aeruginosa, S.typhimurium, E.aerogenes, E.coli and P.syringae, Gram-positive bacteria such as L.monocytogenes, S.epidermidis, S.pyogenes and S.aureus, as well as vancomycin-resistant enterococci (in vitro). Exhibits antimicrobial activity against methicillin-resistant S.aureus, P.mirabilis, and C.albicans in low-salt media, but not in media containing 100 mM NaCl (in vitro). Forms chiral supramolecular assemblies with quinolone signal (PQS) molecules of P.aeruginosa, which may lead to interference of bacterial quorum signaling and perturbance of bacterial biofilm formation. May form supramolecular fiber-like assemblies on bacterial membranes. Induces cytokine and chemokine producation as well as TNF/TNFA and CSF2/GMCSF production in normal human keratinocytes. Exhibits hemolytic activity against red blood cells. Functionally, exhibits antimicrobial activity against E.coli and B.megaterium (in vitro). In Ateles fusciceps (Brown-headed spider monkey), this protein is Cathelicidin antimicrobial peptide.